Reading from the N-terminus, the 437-residue chain is ATP-dependent RNA helicase SUB2 (437 aa).

Residues 1–19 are compositionally biased toward acidic residues; the sequence is MSHEAEEDLLEYSDNEQEV. The disordered stretch occupies residues 1-45; the sequence is MSHEAEEDLLEYSDNEQEVQVDNKATEVNAEGNGESQAKDSDKKG. The Q motif motif lies at 53 to 81; sequence TGFKDFLLKPELSRAIIDCGFEHPSEVQQ. The 176-residue stretch at 84 to 259 folds into the Helicase ATP-binding domain; it reads IPQSIHGTDV…RRFLQNPLEI (176 aa). Residue 97-104 coordinates ATP; sequence AKSGLGKT. Residues 206 to 209 carry the DECD box motif; the sequence is DECD. A Helicase C-terminal domain is found at 287 to 432; that stretch reads KLAQLLDDLE…EFPEEGVDPS (146 aa).

Belongs to the DEAD box helicase family. DECD subfamily.

The protein resides in the nucleus. The enzyme catalyses ATP + H2O = ADP + phosphate + H(+). Functionally, ATP-binding RNA helicase involved in transcription elongation and required for the export of mRNA out of the nucleus. SUB2 also plays a role in pre-mRNA splicing and spliceosome assembly. May be involved in rDNA and telomeric silencing, and maintenance of genome integrity. This is ATP-dependent RNA helicase SUB2 (SUB2) from Kluyveromyces lactis (strain ATCC 8585 / CBS 2359 / DSM 70799 / NBRC 1267 / NRRL Y-1140 / WM37) (Yeast).